We begin with the raw amino-acid sequence, 470 residues long: MNPNQKIITIGSICMAIGIISLILQIGNIISIWVSHSIQTGSQNHTGICNQRIITYENSTWVNQTYVNISNTNVVAGKDTTSMTLAGNSSLCPIRGWAIYSKDNSIRIGSKGDVFVIREPFISCSHLECRTFFLTQGALLNDKHSNGTVKDRSPYRALMSCPIGEAPCPYNSRFESVAWSASACHDGMGWLTIGISGPDDGAVAVLKYNGIITETIKSWRKQILRTQESECVCVNGSCFTIMTDGPSDGPASYRIFKIEKGKITKSIELDAPNSHYEECSCYPDTGTVMCVCRDNWHGSNRPWVSFNQNLDYQIGYICSGVFGDNPRPKDGKGSCDPVNVDGADGIKGFSYRYGNGVWIGRTKSNSSRKGFEMIWDPNGWTDTDSNFLVKQDVVAMTDWSGYSGSFVQHPELTGLDCMRPCFWVELIRGRPREKTTIWTSGSSISFCGVNSDTVNWSWPDGAELPFTIDK.

At 1–6 (MNPNQK) the chain is on the intravirion side. A helical membrane pass occupies residues 7–27 (IITIGSICMAIGIISLILQIG). The segment at 11–33 (GSICMAIGIISLILQIGNIISIW) is involved in apical transport and lipid raft association. Residues 28–470 (NIISIWVSHS…GAELPFTIDK (443 aa)) are Virion surface-facing. The segment at 36-90 (HSIQTGSQNHTGICNQRIITYENSTWVNQTYVNISNTNVVAGKDTTSMTLAGNSS) is hypervariable stalk region. Asn-44, Asn-58, Asn-63, Asn-68, and Asn-88 each carry an N-linked (GlcNAc...) asparagine; by host glycan. Positions 91 to 470 (LCPIRGWAIY…GAELPFTIDK (380 aa)) are head of neuraminidase. Intrachain disulfides connect Cys-92/Cys-417, Cys-124/Cys-129, Cys-184/Cys-231, Cys-233/Cys-238, Cys-279/Cys-292, Cys-281/Cys-290, Cys-318/Cys-335, and Cys-421/Cys-447. Arg-118 lines the substrate pocket. N-linked (GlcNAc...) asparagine; by host glycosylation occurs at Asn-146. The active-site Proton donor/acceptor is Asp-151. Arg-152 is a binding site for substrate. N-linked (GlcNAc...) asparagine; by host glycosylation occurs at Asn-235. 277 to 278 (EE) lines the substrate pocket. Arg-293 contributes to the substrate binding site. Ca(2+) contacts are provided by Asp-294, Gly-298, and Asp-324. N-linked (GlcNAc...) asparagine; by host glycosylation is present at Asn-365. Arg-368 provides a ligand contact to substrate. The Nucleophile role is filled by Tyr-402. An N-linked (GlcNAc...) asparagine; by host glycan is attached at Asn-455.

The protein belongs to the glycosyl hydrolase 34 family. In terms of assembly, homotetramer. Requires Ca(2+) as cofactor. Post-translationally, N-glycosylated.

It is found in the virion membrane. Its subcellular location is the host apical cell membrane. It carries out the reaction Hydrolysis of alpha-(2-&gt;3)-, alpha-(2-&gt;6)-, alpha-(2-&gt;8)- glycosidic linkages of terminal sialic acid residues in oligosaccharides, glycoproteins, glycolipids, colominic acid and synthetic substrates.. Its activity is regulated as follows. Inhibited by the neuraminidase inhibitors zanamivir (Relenza) and oseltamivir (Tamiflu). These drugs interfere with the release of progeny virus from infected cells and are effective against all influenza strains. Resistance to neuraminidase inhibitors is quite rare. Its function is as follows. Catalyzes the removal of terminal sialic acid residues from viral and cellular glycoconjugates. Cleaves off the terminal sialic acids on the glycosylated HA during virus budding to facilitate virus release. Additionally helps virus spread through the circulation by further removing sialic acids from the cell surface. These cleavages prevent self-aggregation and ensure the efficient spread of the progeny virus from cell to cell. Otherwise, infection would be limited to one round of replication. Described as a receptor-destroying enzyme because it cleaves a terminal sialic acid from the cellular receptors. May facilitate viral invasion of the upper airways by cleaving the sialic acid moieties on the mucin of the airway epithelial cells. Likely to plays a role in the budding process through its association with lipid rafts during intracellular transport. May additionally display a raft-association independent effect on budding. Plays a role in the determination of host range restriction on replication and virulence. Sialidase activity in late endosome/lysosome traffic seems to enhance virus replication. The protein is Neuraminidase of Aves (Human).